We begin with the raw amino-acid sequence, 139 residues long: Large ribosomal subunit protein mL42 (139 aa).

A mitochondrion-targeting transit peptide spans 1–32; it reads MAVAAVKWVMSKRTILKHLFPVQNGALYCVCH.

Belongs to the mitochondrion-specific ribosomal protein mL42 family. Component of the mitochondrial ribosome large subunit (39S) which comprises a 16S rRNA and about 50 distinct proteins. Component of the mitochondrial ribosome small subunit (28S) which comprises a 12S rRNA and about 30 distinct proteins.

The protein resides in the mitochondrion. This is Large ribosomal subunit protein mL42 (MRPL42) from Pongo abelii (Sumatran orangutan).